Reading from the N-terminus, the 340-residue chain is Uroporphyrinogen decarboxylase (340 aa).

Residues 23–27 (RQAGR), aspartate 72, tyrosine 147, threonine 202, and histidine 316 contribute to the substrate site.

The protein belongs to the uroporphyrinogen decarboxylase family. In terms of assembly, homodimer.

The protein localises to the cytoplasm. The catalysed reaction is uroporphyrinogen III + 4 H(+) = coproporphyrinogen III + 4 CO2. It functions in the pathway porphyrin-containing compound metabolism; protoporphyrin-IX biosynthesis; coproporphyrinogen-III from 5-aminolevulinate: step 4/4. Functionally, catalyzes the decarboxylation of four acetate groups of uroporphyrinogen-III to yield coproporphyrinogen-III. This is Uroporphyrinogen decarboxylase from Geobacter sulfurreducens (strain ATCC 51573 / DSM 12127 / PCA).